A 379-amino-acid polypeptide reads, in one-letter code: Cytochrome-c peroxidase IdrP1 (379 aa).

The first 24 residues, 1-24 (MNNRKPLQLSLLVASLAVAFTASA), serve as a signal peptide directing secretion. 2 Cytochrome c domains span residues 50 to 158 (EKIA…DAFK) and 204 to 355 (TSQK…EALS). Cysteine 72, cysteine 75, histidine 76, cysteine 219, cysteine 222, and histidine 223 together coordinate heme c.

In terms of assembly, the iodate reductase (Idr) complex is composed of a molybdopterin-dependent iodate reductase (IdrA and IdrB subunits) and two associated peroxidases (IdrP1 and IdrP2). Requires heme c as cofactor.

Its subcellular location is the periplasm. The enzyme catalyses 2 Fe(II)-[cytochrome c] + H2O2 + 2 H(+) = 2 Fe(III)-[cytochrome c] + 2 H2O. Its function is as follows. Involved in iodate respiration. Probably reduces the H(2)O(2) produced by IdrA/IdrB to H(2)O, using a reduced cytochrome c as the electron donor. The sequence is that of Cytochrome-c peroxidase IdrP1 from Pseudomonas sp. (strain SCT).